Reading from the N-terminus, the 630-residue chain is Protein mono-ADP-ribosyltransferase PARP6 (630 aa).

C237 carries the post-translational modification ADP-ribosylcysteine. Residues 394 to 620 (EMTQGSYLEI…QDPKIQKEIM (227 aa)) form the PARP catalytic domain. An ADP-ribosyl aspartic acid modification is found at D600.

The protein belongs to the ARTD/PARP family. Post-translationally, auto-mono-ADP-ribosylated.

The enzyme catalyses L-aspartyl-[protein] + NAD(+) = 4-O-(ADP-D-ribosyl)-L-aspartyl-[protein] + nicotinamide. The catalysed reaction is L-cysteinyl-[protein] + NAD(+) = S-(ADP-D-ribosyl)-L-cysteinyl-[protein] + nicotinamide + H(+). In terms of biological role, mono-ADP-ribosyltransferase that mediates mono-ADP-ribosylation of target proteins. The polypeptide is Protein mono-ADP-ribosyltransferase PARP6 (Homo sapiens (Human)).